The primary structure comprises 339 residues: Anthranilate phosphoribosyltransferase (339 aa).

Residues Gly-81, 84–85 (GD), Thr-89, 91–94 (NIST), 109–117 (KHGNRNLSS), and Ala-121 contribute to the 5-phospho-alpha-D-ribose 1-diphosphate site. Gly-81 contacts anthranilate. A Mg(2+)-binding site is contributed by Ser-93. Asn-112 contributes to the anthranilate binding site. Residue Arg-167 participates in anthranilate binding. Mg(2+) is bound by residues Asp-226 and Glu-227.

This sequence belongs to the anthranilate phosphoribosyltransferase family. In terms of assembly, homodimer. Requires Mg(2+) as cofactor.

The enzyme catalyses N-(5-phospho-beta-D-ribosyl)anthranilate + diphosphate = 5-phospho-alpha-D-ribose 1-diphosphate + anthranilate. Its pathway is amino-acid biosynthesis; L-tryptophan biosynthesis; L-tryptophan from chorismate: step 2/5. In terms of biological role, catalyzes the transfer of the phosphoribosyl group of 5-phosphorylribose-1-pyrophosphate (PRPP) to anthranilate to yield N-(5'-phosphoribosyl)-anthranilate (PRA). In Roseobacter denitrificans (strain ATCC 33942 / OCh 114) (Erythrobacter sp. (strain OCh 114)), this protein is Anthranilate phosphoribosyltransferase.